The sequence spans 132 residues: Small ribosomal subunit protein eS24 (132 aa).

Basic and acidic residues predominate over residues 92-101 (LARHGLYEKK). Residues 92-132 (LARHGLYEKKRPTRKQRKERKNRMKKVRGTKKSKVGAAAKK) are disordered. A compositionally biased stretch (basic residues) spans 102 to 132 (RPTRKQRKERKNRMKKVRGTKKSKVGAAAKK).

Belongs to the eukaryotic ribosomal protein eS24 family.

The sequence is that of Small ribosomal subunit protein eS24 (RpS24) from Spodoptera frugiperda (Fall armyworm).